The primary structure comprises 411 residues: Serine hydroxymethyltransferase (411 aa).

(6S)-5,6,7,8-tetrahydrofolate-binding positions include Leu119 and 123-125 (GHL). Lys228 carries the post-translational modification N6-(pyridoxal phosphate)lysine. Residue 351 to 353 (SPF) coordinates (6S)-5,6,7,8-tetrahydrofolate.

This sequence belongs to the SHMT family. As to quaternary structure, homodimer. Pyridoxal 5'-phosphate serves as cofactor.

It is found in the cytoplasm. The catalysed reaction is (6R)-5,10-methylene-5,6,7,8-tetrahydrofolate + glycine + H2O = (6S)-5,6,7,8-tetrahydrofolate + L-serine. Its pathway is one-carbon metabolism; tetrahydrofolate interconversion. It participates in amino-acid biosynthesis; glycine biosynthesis; glycine from L-serine: step 1/1. In terms of biological role, catalyzes the reversible interconversion of serine and glycine with tetrahydrofolate (THF) serving as the one-carbon carrier. This reaction serves as the major source of one-carbon groups required for the biosynthesis of purines, thymidylate, methionine, and other important biomolecules. Also exhibits THF-independent aldolase activity toward beta-hydroxyamino acids, producing glycine and aldehydes, via a retro-aldol mechanism. The protein is Serine hydroxymethyltransferase of Clostridium beijerinckii (strain ATCC 51743 / NCIMB 8052) (Clostridium acetobutylicum).